The chain runs to 291 residues: ATP synthase gamma chain (291 aa).

The protein belongs to the ATPase gamma chain family. F-type ATPases have 2 components, CF(1) - the catalytic core - and CF(0) - the membrane proton channel. CF(1) has five subunits: alpha(3), beta(3), gamma(1), delta(1), epsilon(1). CF(0) has three main subunits: a, b and c.

The protein resides in the cell inner membrane. Its function is as follows. Produces ATP from ADP in the presence of a proton gradient across the membrane. The gamma chain is believed to be important in regulating ATPase activity and the flow of protons through the CF(0) complex. This chain is ATP synthase gamma chain, found in Sphingopyxis alaskensis (strain DSM 13593 / LMG 18877 / RB2256) (Sphingomonas alaskensis).